A 232-amino-acid chain; its full sequence is Triggering receptor expressed on myeloid cells 1 (232 aa).

The N-terminal stretch at 1–20 (MRKAGVWGLLWMLFIEEIQA) is a signal peptide. Residues 21–125 (AAEVFEEKCT…DPIILFHPVR (105 aa)) form the Ig-like V-type domain. Topologically, residues 21-203 (AAEVFEEKCT…THVNRAPGIS (183 aa)) are extracellular. Cys-41 and Cys-109 are oxidised to a cystine. Positions 152-186 (PLPVTTKLRPRPRPRPKPVTQPIPTSADRLSSPGF) are disordered. The N-linked (GlcNAc...) asparagine glycan is linked to Asn-192. A helical membrane pass occupies residues 204–224 (IIIPAACGLLSKTLVFIGLFA). The Cytoplasmic portion of the chain corresponds to 225 to 232 (VTHRSFAS).

In terms of assembly, monomer. Homomultimer; when activated. Interacts with TYROBP/DAP12. Interacts with TLR4. Detected in bone marrow, tongue, lung, liver, thymus, spleen, jejunum, ileum and lymph nodes.

The protein resides in the cell membrane. Cell surface receptor that plays important roles in innate and adaptive immunity by amplifying inflammatory responses. Upon activation by various ligands such as PGLYRP1, HMGB1 or HSP70, multimerizes and forms a complex with transmembrane adapter TYROBP/DAP12. In turn, initiates a SYK-mediated cascade of tyrosine phosphorylation, activating multiple downstream mediators such as BTK, MAPK1, MAPK3 or phospholipase C-gamma. This cascade promotes the neutrophil- and macrophage-mediated release of pro-inflammatory cytokines and/or chemokines, as well as their migration and thereby amplifies inflammatory responses that are triggered by bacterial and fungal infections. By also promoting the amplification of inflammatory signals that are initially triggered by Toll-like receptor (TLR) and NOD-like receptor engagement, plays a major role in the pathophysiology of acute and chronic inflammatory diseases of different etiologies including septic shock and atherosclerosis. This is Triggering receptor expressed on myeloid cells 1 (TREM1) from Bos taurus (Bovine).